Consider the following 258-residue polypeptide: Putative ankyrin repeat domain-containing protein 30B-like (258 aa).

The segment at 1-21 is disordered; that stretch reads MERLSAAPVKGQTGPERPSPF. ANK repeat units lie at residues 71–100, 104–133, 137–166, and 170–199; these read KKRTALYWACANGHAEVVTLLVDRKCQLDV, ENRTILMKALQCQREACANILIDSGADPNI, YGNTAVHYAVNSENLSVVAKLLSCGADIEV, and AGHTPLLLAIRKRSEEIVEFLLTKNANANA. The segment at 216-258 is disordered; the sequence is KISKNSQNSNPEGTSEGTPDEAAPLAERTPDTAESLVERTPDE. The segment covering 218–232 has biased composition (polar residues); sequence SKNSQNSNPEGTSEG. The span at 243-258 shows a compositional bias: basic and acidic residues; the sequence is RTPDTAESLVERTPDE.

This Homo sapiens (Human) protein is Putative ankyrin repeat domain-containing protein 30B-like (ANKRD30BL).